A 332-amino-acid polypeptide reads, in one-letter code: Putative integrase/recombinase y4rC (332 aa).

Residues 5 to 98 (ASLAPLLESF…AIHSFFRYAA (94 aa)) enclose the Core-binding (CB) domain. The 186-residue stretch at 122 to 307 (TLVNFLTRPE…TLAMKEAALA (186 aa)) folds into the Tyr recombinase domain. Residues arginine 162, lysine 187, histidine 259, arginine 262, and histidine 285 contribute to the active site. The active-site O-(3'-phospho-DNA)-tyrosine intermediate is tyrosine 294.

This sequence belongs to the 'phage' integrase family.

This chain is Putative integrase/recombinase y4rC, found in Sinorhizobium fredii (strain NBRC 101917 / NGR234).